The following is a 368-amino-acid chain: UDP-N-acetylglucosamine--N-acetylmuramyl-(pentapeptide) pyrophosphoryl-undecaprenol N-acetylglucosamine transferase (368 aa).

UDP-N-acetyl-alpha-D-glucosamine contacts are provided by residues 11–13 (TGG), N123, R164, S188, I250, and Q295.

Belongs to the glycosyltransferase 28 family. MurG subfamily.

Its subcellular location is the cell inner membrane. It carries out the reaction di-trans,octa-cis-undecaprenyl diphospho-N-acetyl-alpha-D-muramoyl-L-alanyl-D-glutamyl-meso-2,6-diaminopimeloyl-D-alanyl-D-alanine + UDP-N-acetyl-alpha-D-glucosamine = di-trans,octa-cis-undecaprenyl diphospho-[N-acetyl-alpha-D-glucosaminyl-(1-&gt;4)]-N-acetyl-alpha-D-muramoyl-L-alanyl-D-glutamyl-meso-2,6-diaminopimeloyl-D-alanyl-D-alanine + UDP + H(+). It participates in cell wall biogenesis; peptidoglycan biosynthesis. Functionally, cell wall formation. Catalyzes the transfer of a GlcNAc subunit on undecaprenyl-pyrophosphoryl-MurNAc-pentapeptide (lipid intermediate I) to form undecaprenyl-pyrophosphoryl-MurNAc-(pentapeptide)GlcNAc (lipid intermediate II). The protein is UDP-N-acetylglucosamine--N-acetylmuramyl-(pentapeptide) pyrophosphoryl-undecaprenol N-acetylglucosamine transferase of Solidesulfovibrio magneticus (strain ATCC 700980 / DSM 13731 / RS-1) (Desulfovibrio magneticus).